A 138-amino-acid chain; its full sequence is Nucleoside diphosphate kinase (138 aa).

Positions 10, 58, 86, 92, 103, and 113 each coordinate ATP. Residue His116 is the Pros-phosphohistidine intermediate of the active site.

It belongs to the NDK family. Homotetramer. Mg(2+) is required as a cofactor.

The protein resides in the cytoplasm. The catalysed reaction is a 2'-deoxyribonucleoside 5'-diphosphate + ATP = a 2'-deoxyribonucleoside 5'-triphosphate + ADP. The enzyme catalyses a ribonucleoside 5'-diphosphate + ATP = a ribonucleoside 5'-triphosphate + ADP. In terms of biological role, major role in the synthesis of nucleoside triphosphates other than ATP. The ATP gamma phosphate is transferred to the NDP beta phosphate via a ping-pong mechanism, using a phosphorylated active-site intermediate. The polypeptide is Nucleoside diphosphate kinase (Actinobacillus pleuropneumoniae serotype 5b (strain L20)).